The sequence spans 391 residues: CBS domain-containing protein CBSX5 (391 aa).

CBS domains follow at residues 16–81 and 331–391; these read GKPP…DHDH and MARK…ENDM.

In Arabidopsis thaliana (Mouse-ear cress), this protein is CBS domain-containing protein CBSX5 (CBSX5).